The primary structure comprises 170 residues: NADH-quinone oxidoreductase subunit B (170 aa).

Cys-37, Cys-38, Cys-102, and Cys-131 together coordinate [4Fe-4S] cluster.

This sequence belongs to the complex I 20 kDa subunit family. NDH-1 is composed of 14 different subunits. Subunits NuoB, C, D, E, F, and G constitute the peripheral sector of the complex. [4Fe-4S] cluster serves as cofactor.

The protein localises to the cell inner membrane. It carries out the reaction a quinone + NADH + 5 H(+)(in) = a quinol + NAD(+) + 4 H(+)(out). Functionally, NDH-1 shuttles electrons from NADH, via FMN and iron-sulfur (Fe-S) centers, to quinones in the respiratory chain. The immediate electron acceptor for the enzyme in this species is believed to be ubiquinone. Couples the redox reaction to proton translocation (for every two electrons transferred, four hydrogen ions are translocated across the cytoplasmic membrane), and thus conserves the redox energy in a proton gradient. This is NADH-quinone oxidoreductase subunit B from Geotalea daltonii (strain DSM 22248 / JCM 15807 / FRC-32) (Geobacter daltonii).